A 160-amino-acid polypeptide reads, in one-letter code: MATEVVDVLVTGGKATAGPPLGPAVGPLGINIMNVVKEINEKTKDYAGMSVPVKVIVNTDDRSFEIEVGIPPTSALIKTELGLDKGSTEPKAIVAGNLSMEQAVKIAKMKKDSMLSFTLKNATKEVIGTCVSTGINVEGMSPRDAQKAIDAGEFDEYFNE.

The protein belongs to the universal ribosomal protein uL11 family. As to quaternary structure, part of the ribosomal stalk of the 50S ribosomal subunit. Interacts with L10 and the large rRNA to form the base of the stalk. L10 forms an elongated spine to which L12 dimers bind in a sequential fashion forming a multimeric L10(L12)X complex.

In terms of biological role, forms part of the ribosomal stalk which helps the ribosome interact with GTP-bound translation factors. The sequence is that of Large ribosomal subunit protein uL11 from Methanococcus aeolicus (strain ATCC BAA-1280 / DSM 17508 / OCM 812 / Nankai-3).